Reading from the N-terminus, the 140-residue chain is Nucleoside diphosphate kinase (140 aa).

The ATP site is built by Lys11, Phe59, Arg87, Thr93, Arg104, and Asn114. His117 serves as the catalytic Pros-phosphohistidine intermediate.

It belongs to the NDK family. In terms of assembly, homotetramer. Requires Mg(2+) as cofactor.

It is found in the cytoplasm. The enzyme catalyses a 2'-deoxyribonucleoside 5'-diphosphate + ATP = a 2'-deoxyribonucleoside 5'-triphosphate + ADP. The catalysed reaction is a ribonucleoside 5'-diphosphate + ATP = a ribonucleoside 5'-triphosphate + ADP. In terms of biological role, major role in the synthesis of nucleoside triphosphates other than ATP. The ATP gamma phosphate is transferred to the NDP beta phosphate via a ping-pong mechanism, using a phosphorylated active-site intermediate. The protein is Nucleoside diphosphate kinase of Methylobacterium radiotolerans (strain ATCC 27329 / DSM 1819 / JCM 2831 / NBRC 15690 / NCIMB 10815 / 0-1).